The sequence spans 370 residues: Anhydro-N-acetylmuramic acid kinase (370 aa).

12–19 (GTSLDGID) is a binding site for ATP.

This sequence belongs to the anhydro-N-acetylmuramic acid kinase family.

It carries out the reaction 1,6-anhydro-N-acetyl-beta-muramate + ATP + H2O = N-acetyl-D-muramate 6-phosphate + ADP + H(+). It functions in the pathway amino-sugar metabolism; 1,6-anhydro-N-acetylmuramate degradation. The protein operates within cell wall biogenesis; peptidoglycan recycling. In terms of biological role, catalyzes the specific phosphorylation of 1,6-anhydro-N-acetylmuramic acid (anhMurNAc) with the simultaneous cleavage of the 1,6-anhydro ring, generating MurNAc-6-P. Is required for the utilization of anhMurNAc either imported from the medium or derived from its own cell wall murein, and thus plays a role in cell wall recycling. The chain is Anhydro-N-acetylmuramic acid kinase from Yersinia enterocolitica serotype O:8 / biotype 1B (strain NCTC 13174 / 8081).